Consider the following 82-residue polypeptide: NADH-ubiquinone oxidoreductase 9.5 kDa subunit (82 aa).

The chain crosses the membrane as a helical span at residues 25–43 (AYFYSCVIAGLGPVFLTVV).

It belongs to the complex I NDUFA3 subunit family. Complex I is composed of about 40 different subunits.

The protein localises to the mitochondrion inner membrane. In terms of biological role, accessory subunit of the mitochondrial membrane respiratory chain NADH dehydrogenase (Complex I), that is believed not to be involved in catalysis. Complex I functions in the transfer of electrons from NADH to the respiratory chain. The immediate electron acceptor for the enzyme is believed to be ubiquinone. This subunit binds ubiquinone. The sequence is that of NADH-ubiquinone oxidoreductase 9.5 kDa subunit (nuo9.5) from Neurospora crassa (strain ATCC 24698 / 74-OR23-1A / CBS 708.71 / DSM 1257 / FGSC 987).